Consider the following 267-residue polypeptide: Phosphate import ATP-binding protein PstB 2 (267 aa).

The ABC transporter domain maps to 21–262; the sequence is LSTKDLHVYY…AKLQSTSDYV (242 aa). 53-60 serves as a coordination point for ATP; it reads GPSGCGKS.

Belongs to the ABC transporter superfamily. Phosphate importer (TC 3.A.1.7) family. In terms of assembly, the complex is composed of two ATP-binding proteins (PstB), two transmembrane proteins (PstC and PstA) and a solute-binding protein (PstS).

It localises to the cell membrane. The catalysed reaction is phosphate(out) + ATP + H2O = ADP + 2 phosphate(in) + H(+). Part of the ABC transporter complex PstSACB involved in phosphate import. Responsible for energy coupling to the transport system. The sequence is that of Phosphate import ATP-binding protein PstB 2 from Streptococcus mutans serotype c (strain ATCC 700610 / UA159).